The following is a 174-amino-acid chain: NADH-ubiquinone oxidoreductase chain 6 (174 aa).

A run of 5 helical transmembrane segments spans residues 1 to 21 (MTYV…GFSS), 24 to 44 (SPIY…GIVL), 46 to 66 (FGGS…MLVV), 86 to 106 (VMIL…VVYM), and 151 to 171 (WLMV…IEIT).

The protein belongs to the complex I subunit 6 family. As to quaternary structure, core subunit of respiratory chain NADH dehydrogenase (Complex I) which is composed of 45 different subunits.

Its subcellular location is the mitochondrion inner membrane. It carries out the reaction a ubiquinone + NADH + 5 H(+)(in) = a ubiquinol + NAD(+) + 4 H(+)(out). In terms of biological role, core subunit of the mitochondrial membrane respiratory chain NADH dehydrogenase (Complex I) which catalyzes electron transfer from NADH through the respiratory chain, using ubiquinone as an electron acceptor. Essential for the catalytic activity and assembly of complex I. In Oryctolagus cuniculus (Rabbit), this protein is NADH-ubiquinone oxidoreductase chain 6 (MT-ND6).